Reading from the N-terminus, the 339-residue chain is Ribosomal RNA small subunit methyltransferase H (339 aa).

S-adenosyl-L-methionine is bound by residues 52-54 (GGH), D71, F98, D130, and Q137.

It belongs to the methyltransferase superfamily. RsmH family.

It localises to the cytoplasm. It carries out the reaction cytidine(1402) in 16S rRNA + S-adenosyl-L-methionine = N(4)-methylcytidine(1402) in 16S rRNA + S-adenosyl-L-homocysteine + H(+). Its function is as follows. Specifically methylates the N4 position of cytidine in position 1402 (C1402) of 16S rRNA. This chain is Ribosomal RNA small subunit methyltransferase H, found in Corynebacterium diphtheriae (strain ATCC 700971 / NCTC 13129 / Biotype gravis).